A 430-amino-acid chain; its full sequence is Glutamate-1-semialdehyde 2,1-aminomutase (430 aa).

The residue at position 269 (Lys-269) is an N6-(pyridoxal phosphate)lysine.

Belongs to the class-III pyridoxal-phosphate-dependent aminotransferase family. HemL subfamily. As to quaternary structure, homodimer. Pyridoxal 5'-phosphate serves as cofactor.

It is found in the cytoplasm. It catalyses the reaction (S)-4-amino-5-oxopentanoate = 5-aminolevulinate. It functions in the pathway porphyrin-containing compound metabolism; protoporphyrin-IX biosynthesis; 5-aminolevulinate from L-glutamyl-tRNA(Glu): step 2/2. This chain is Glutamate-1-semialdehyde 2,1-aminomutase, found in Desulfitobacterium hafniense (strain Y51).